The following is a 315-amino-acid chain: Rhomboid-related protein 4 (315 aa).

Topologically, residues 1-21 (MQRRSRGINTGLILLLSQIFH) are cytoplasmic. Residues 22–42 (VGINNIPPVTLATLALNIWFF) traverse the membrane as a helical segment. The Extracellular segment spans residues 43–106 (LNPQKPLYSS…RRLGSRWFAY (64 aa)). Residues 107–127 (VITAFSVLTGVVYLLLQFAVA) form a helical membrane-spanning segment. Residues 128 to 138 (EFMDEPDFKRS) lie on the Cytoplasmic side of the membrane. A helical transmembrane segment spans residues 139–157 (CAVGFSGVLFALKVLNNHY). S144 serves as the catalytic Nucleophile. At 158–180 (CPGGFVNILGFPVPNRFACWVEL) the chain is on the extracellular side. Residues 181-201 (VAIHLFSPGTSFAGHLAGILV) form a helical membrane-spanning segment. H195 is an active-site residue. The Cytoplasmic portion of the chain corresponds to 202–315 (GLMYTQGPLK…RQRLHRFDSQ (114 aa)). Residues 269–284 (SEEEQLERALQASLWD) form a ubiquitin-binding domain (UBD) region. The tract at residues 283 to 315 (WDRGNTRNSPPPYGFHLSPEEMRRQRLHRFDSQ) is disordered. Over residues 300–315 (SPEEMRRQRLHRFDSQ) the composition is skewed to basic and acidic residues. A VCP/p97-interacting motif (VIM) region spans residues 301–315 (PEEMRRQRLHRFDSQ).

Belongs to the peptidase S54 family. Interacts (via C-terminal domain) with VCP. Interacts with ubiquitin and ubiquitinated proteins. Interacts with BIK and STEAP3. As to expression, expressed strongly in testis.

The protein resides in the endoplasmic reticulum membrane. It localises to the mitochondrion membrane. It catalyses the reaction Cleaves type-1 transmembrane domains using a catalytic dyad composed of serine and histidine that are contributed by different transmembrane domains.. With respect to regulation, inhibited by aprotinin. In terms of biological role, intramembrane-cleaving serine protease that cleaves single transmembrane or multi-pass membrane proteins in the hydrophobic plane of the membrane, luminal loops and juxtamembrane regions. Involved in regulated intramembrane proteolysis and the subsequent release of functional polypeptides from their membrane anchors. Functional component of endoplasmic reticulum-associated degradation (ERAD) for misfolded membrane proteins. Required for the degradation process of some specific misfolded endoplasmic reticulum (ER) luminal proteins. Participates in the transfer of misfolded proteins from the ER to the cytosol, where they are destroyed by the proteasome in a ubiquitin-dependent manner. Functions in BIK, MPZ, PKD1, PTCRA, RHO, STEAP3 and TRAC processing. Involved in the regulation of exosomal secretion; inhibits the TSAP6-mediated secretion pathway. Involved in the regulation of apoptosis; modulates BIK-mediated apoptotic activity. Also plays a role in the regulation of spermatogenesis; inhibits apoptotic activity in spermatogonia. This Homo sapiens (Human) protein is Rhomboid-related protein 4 (RHBDD1).